Reading from the N-terminus, the 237-residue chain is Increased recombination centers protein 6 (237 aa).

The protein belongs to the IRC6 family.

Involved in gross chromosomal rearrangements (GCRs) and telomere healing. The sequence is that of Increased recombination centers protein 6 (IRC6) from Saccharomyces cerevisiae (strain ATCC 204508 / S288c) (Baker's yeast).